A 117-amino-acid polypeptide reads, in one-letter code: Large ribosomal subunit protein bL20 (117 aa).

The protein belongs to the bacterial ribosomal protein bL20 family.

In terms of biological role, binds directly to 23S ribosomal RNA and is necessary for the in vitro assembly process of the 50S ribosomal subunit. It is not involved in the protein synthesizing functions of that subunit. The sequence is that of Large ribosomal subunit protein bL20 from Pasteurella multocida (strain Pm70).